The sequence spans 323 residues: tRNA U34 carboxymethyltransferase (323 aa).

Carboxy-S-adenosyl-L-methionine contacts are provided by residues lysine 91, tryptophan 105, lysine 110, glycine 130, 152–154, 181–182, methionine 196, tyrosine 200, and arginine 315; these read DPT and IE.

This sequence belongs to the class I-like SAM-binding methyltransferase superfamily. CmoB family. As to quaternary structure, homotetramer.

The enzyme catalyses carboxy-S-adenosyl-L-methionine + 5-hydroxyuridine(34) in tRNA = 5-carboxymethoxyuridine(34) in tRNA + S-adenosyl-L-homocysteine + H(+). In terms of biological role, catalyzes carboxymethyl transfer from carboxy-S-adenosyl-L-methionine (Cx-SAM) to 5-hydroxyuridine (ho5U) to form 5-carboxymethoxyuridine (cmo5U) at position 34 in tRNAs. In Salmonella enteritidis PT4 (strain P125109), this protein is tRNA U34 carboxymethyltransferase.